The chain runs to 560 residues: Terminal uridylyltransferase Tailor (560 aa).

Residues 169–197 (EQHPKPNPNNQPVQPHPTHQTKQEKKQAQ) are disordered. Residues 176–188 (PNNQPVQPHPTHQ) are compositionally biased toward low complexity. The Mg(2+) site is built by Asp278 and Asp280. One can recognise a PAP-associated domain in the interval 455–522 (LRNFFAYFAK…VVQDPIQLNH (68 aa)).

The cofactor is Mg(2+).

Its subcellular location is the cytoplasm. The catalysed reaction is RNA(n) + UTP = RNA(n)-3'-uridine ribonucleotide + diphosphate. Uridylyltransferase which mediates terminal uridylation of miRNAs, leading to their degradation. Has high specificity for splicing-derived miRNAs (mirtrons) and other miRNA substrates containing a 3'-G terminal nucleotide. Appears to be a major suppressor of mirtron biogenesis. The chain is Terminal uridylyltransferase Tailor from Drosophila melanogaster (Fruit fly).